The sequence spans 139 residues: Peptide methionine sulfoxide reductase MsrB (139 aa).

A MsrB domain is found at 8–130 (EREWQRELSP…NSASLQLKTD (123 aa)). Residues cysteine 47, cysteine 50, cysteine 96, and cysteine 99 each coordinate Zn(2+). Cysteine 119 acts as the Nucleophile in catalysis.

It belongs to the MsrB Met sulfoxide reductase family. It depends on Zn(2+) as a cofactor.

It catalyses the reaction L-methionyl-[protein] + [thioredoxin]-disulfide + H2O = L-methionyl-(R)-S-oxide-[protein] + [thioredoxin]-dithiol. The protein is Peptide methionine sulfoxide reductase MsrB of Acinetobacter baylyi (strain ATCC 33305 / BD413 / ADP1).